The sequence spans 179 residues: Replication restart protein DnaT (179 aa).

A compositionally biased stretch (polar residues) spans 151–168; the sequence is SRSSNGGMPQRDINSVSE. The disordered stretch occupies residues 151–179; it reads SRSSNGGMPQRDINSVSEPDNHIPPGFRG.

The protein belongs to the DnaT family. In terms of assembly, homooligomerizes. Interacts with PriB. Component of the replication restart primosome. Primosome assembly occurs via a 'hand-off' mechanism. PriA binds to replication forks, subsequently PriB then DnaT bind; DnaT then displaces ssDNA to generate the helicase loading substrate.

Involved in the restart of stalled replication forks, which reloads the replicative helicase on sites other than the origin of replication. Can function in multiple replication restart pathways. Displaces ssDNA from a PriB-ssDNA complex. Probably forms a spiral filament on ssDNA. This is Replication restart protein DnaT from Salmonella arizonae (strain ATCC BAA-731 / CDC346-86 / RSK2980).